Consider the following 264-residue polypeptide: Small ribosomal subunit protein eS1 (264 aa).

Positions 233-264 (GEGGGAGKPSGDEAGAKVERADGYEPPVQESV) are disordered. The span at 242 to 255 (SGDEAGAKVERADG) shows a compositional bias: basic and acidic residues.

The protein belongs to the eukaryotic ribosomal protein eS1 family. As to quaternary structure, component of the small ribosomal subunit. Mature ribosomes consist of a small (40S) and a large (60S) subunit. The 40S subunit contains about 33 different proteins and 1 molecule of RNA (18S). The 60S subunit contains about 49 different proteins and 3 molecules of RNA (25S, 5.8S and 5S).

It localises to the cytoplasm. This is Small ribosomal subunit protein eS1 from Eimeria tenella (Coccidian parasite).